The primary structure comprises 270 residues: Aliphatic sulfonates import ATP-binding protein SsuB 2 (270 aa).

The ABC transporter domain maps to 17–241 (LLDLRIARKL…PRDRRDPSLA (225 aa)). 50-57 (GPSGCGKS) lines the ATP pocket.

The protein belongs to the ABC transporter superfamily. Aliphatic sulfonates importer (TC 3.A.1.17.2) family. As to quaternary structure, the complex is composed of two ATP-binding proteins (SsuB), two transmembrane proteins (SsuC) and a solute-binding protein (SsuA).

The protein resides in the cell inner membrane. It carries out the reaction ATP + H2O + aliphatic sulfonate-[sulfonate-binding protein]Side 1 = ADP + phosphate + aliphatic sulfonateSide 2 + [sulfonate-binding protein]Side 1.. Its function is as follows. Part of the ABC transporter complex SsuABC involved in aliphatic sulfonates import. Responsible for energy coupling to the transport system. The polypeptide is Aliphatic sulfonates import ATP-binding protein SsuB 2 (Burkholderia cenocepacia (strain HI2424)).